The following is a 128-amino-acid chain: Small ribosomal subunit protein bS6 (128 aa).

It belongs to the bacterial ribosomal protein bS6 family.

Its function is as follows. Binds together with bS18 to 16S ribosomal RNA. The polypeptide is Small ribosomal subunit protein bS6 (rpsF) (Thermotoga maritima (strain ATCC 43589 / DSM 3109 / JCM 10099 / NBRC 100826 / MSB8)).